A 267-amino-acid chain; its full sequence is L-aspartate dehydrogenase (267 aa).

NAD(+)-binding residues include Ala-124 and Asn-190. Residue His-220 is part of the active site.

The protein belongs to the L-aspartate dehydrogenase family.

It catalyses the reaction L-aspartate + NADP(+) + H2O = oxaloacetate + NH4(+) + NADPH + H(+). It carries out the reaction L-aspartate + NAD(+) + H2O = oxaloacetate + NH4(+) + NADH + H(+). It participates in cofactor biosynthesis; NAD(+) biosynthesis; iminoaspartate from L-aspartate (dehydrogenase route): step 1/1. Functionally, specifically catalyzes the NAD or NADP-dependent dehydrogenation of L-aspartate to iminoaspartate. This is L-aspartate dehydrogenase from Polaromonas sp. (strain JS666 / ATCC BAA-500).